The chain runs to 229 residues: Uracil-DNA glycosylase (229 aa).

Asp64 functions as the Proton acceptor in the catalytic mechanism.

The protein belongs to the uracil-DNA glycosylase (UDG) superfamily. UNG family.

It is found in the cytoplasm. The catalysed reaction is Hydrolyzes single-stranded DNA or mismatched double-stranded DNA and polynucleotides, releasing free uracil.. Excises uracil residues from the DNA which can arise as a result of misincorporation of dUMP residues by DNA polymerase or due to deamination of cytosine. This is Uracil-DNA glycosylase from Geobacillus kaustophilus (strain HTA426).